Reading from the N-terminus, the 418-residue chain is Serine/threonine transporter SstT (418 aa).

Transmembrane regions (helical) follow at residues 16 to 36, 45 to 65, 83 to 103, 142 to 162, 192 to 212, 218 to 238, 289 to 309, 317 to 337, and 364 to 384; these read SLVS…TLIP, LGTL…LLLV, LLIL…VASF, ALLE…GLSL, PLGI…SALL, LIVL…LIVF, VSIP…ITVL, LGIS…TISA, and VAMQ…SAET.

This sequence belongs to the dicarboxylate/amino acid:cation symporter (DAACS) (TC 2.A.23) family.

Its subcellular location is the cell inner membrane. It carries out the reaction L-serine(in) + Na(+)(in) = L-serine(out) + Na(+)(out). The enzyme catalyses L-threonine(in) + Na(+)(in) = L-threonine(out) + Na(+)(out). In terms of biological role, involved in the import of serine and threonine into the cell, with the concomitant import of sodium (symport system). The chain is Serine/threonine transporter SstT from Tolumonas auensis (strain DSM 9187 / NBRC 110442 / TA 4).